The primary structure comprises 41 residues: Photosystem II reaction center protein J (41 aa).

A helical membrane pass occupies residues 9-29 (IPLWFVGMVGGLAALGLLAIF).

It belongs to the PsbJ family. As to quaternary structure, PSII is composed of 1 copy each of membrane proteins PsbA, PsbB, PsbC, PsbD, PsbE, PsbF, PsbH, PsbI, PsbJ, PsbK, PsbL, PsbM, PsbT, PsbX, PsbY, PsbZ, Psb30/Ycf12, at least 3 peripheral proteins of the oxygen-evolving complex and a large number of cofactors. It forms dimeric complexes.

The protein resides in the plastid. It localises to the chloroplast thylakoid membrane. Its function is as follows. One of the components of the core complex of photosystem II (PSII). PSII is a light-driven water:plastoquinone oxidoreductase that uses light energy to abstract electrons from H(2)O, generating O(2) and a proton gradient subsequently used for ATP formation. It consists of a core antenna complex that captures photons, and an electron transfer chain that converts photonic excitation into a charge separation. The chain is Photosystem II reaction center protein J from Ostreococcus tauri.